The chain runs to 1267 residues: DNA-directed RNA polymerase subunit beta'' (1267 aa).

Residues C222, C290, C297, and C300 each coordinate Zn(2+).

The protein belongs to the RNA polymerase beta' chain family. RpoC2 subfamily. In terms of assembly, in plastids the minimal PEP RNA polymerase catalytic core is composed of four subunits: alpha, beta, beta', and beta''. When a (nuclear-encoded) sigma factor is associated with the core the holoenzyme is formed, which can initiate transcription. Zn(2+) is required as a cofactor.

The protein resides in the plastid. Its subcellular location is the chloroplast. The catalysed reaction is RNA(n) + a ribonucleoside 5'-triphosphate = RNA(n+1) + diphosphate. DNA-dependent RNA polymerase catalyzes the transcription of DNA into RNA using the four ribonucleoside triphosphates as substrates. This is DNA-directed RNA polymerase subunit beta'' from Emiliania huxleyi (Coccolithophore).